A 575-amino-acid polypeptide reads, in one-letter code: Cytochrome P450 monooxygenase opaB (575 aa).

Residue Asn-6 is glycosylated (N-linked (GlcNAc...) asparagine). A helical transmembrane segment spans residues 37 to 57 (FILAAILASIILLIIRNSMLS). N-linked (GlcNAc...) asparagine glycans are attached at residues Asn-83 and Asn-242. Cys-521 is a binding site for heme.

Belongs to the cytochrome P450 family. Requires heme as cofactor.

The protein localises to the membrane. It participates in secondary metabolite biosynthesis. Its function is as follows. Cytochrome P450 monooxygenase; part of the gene cluster that mediates the biosynthesis of oxepinamides, derivatives of anthranilyl-containing tripeptides that share an oxepin ring and a fused pyrimidinone moiety. The nonribosomal peptide synthetase (NRPS) opaA assembles the quinazolinone core with D-Phe incorporation. The first adenylation domain (A1) of opaA loads and activates anthranilic acid whereas the second A domain (A2) is for activating of L-Phe, which is then converted to D-form by the E domain. The third A domain (A3) is responsible for L-Ile activation and the terminal condensation domain C3 for cyclization and releasing the NRPS product protuboxepin K. The cytochrome P450 monooxygenase opaB then catalyzes alone the oxepin ring formation to convert protuboxepin K into protuboxepin A. The flavoenzyme opaC installs subsequently one hydroxyl group at the oxepin ring, accompanied by double bond migration, to form 15-epi-oxepinamide E. The epimerase opaE changes the D-Phe residue back to L-form, leading to oxepinamide E, which is further methylated at the hydroxyl group at C-12 by the O-methyltransferase OpaF to yield oxepinamide F. The polypeptide is Cytochrome P450 monooxygenase opaB (Aspergillus ustus).